The primary structure comprises 226 residues: tRNA (guanine-N(7)-)-methyltransferase (226 aa).

The interval Met1 to Val22 is disordered. Residues Glu59, Glu84, Asp111, and Asp133 each coordinate S-adenosyl-L-methionine. Residue Asp133 is part of the active site. Position 137 (Lys137) interacts with substrate. Residues Arg139–Arg144 form an interaction with RNA region. Residues Asp169 and Thr206–Glu209 each bind substrate.

The protein belongs to the class I-like SAM-binding methyltransferase superfamily. TrmB family.

The catalysed reaction is guanosine(46) in tRNA + S-adenosyl-L-methionine = N(7)-methylguanosine(46) in tRNA + S-adenosyl-L-homocysteine. The protein operates within tRNA modification; N(7)-methylguanine-tRNA biosynthesis. In terms of biological role, catalyzes the formation of N(7)-methylguanine at position 46 (m7G46) in tRNA. The sequence is that of tRNA (guanine-N(7)-)-methyltransferase from Caulobacter vibrioides (strain ATCC 19089 / CIP 103742 / CB 15) (Caulobacter crescentus).